A 558-amino-acid chain; its full sequence is Polypeptide N-acetylgalactosaminyltransferase 16 (558 aa).

Residues 1 to 6 (MRKIRA) are Cytoplasmic-facing. A helical; Signal-anchor for type II membrane protein membrane pass occupies residues 7 to 26 (NAIAILTVAWILGTFYYLWQ). The Lumenal portion of the chain corresponds to 27 to 558 (DNRAHAASSG…AQQWQLLPHT (532 aa)). Residues 33 to 54 (ASSGGRGAQRAGRRSEQLREDR) form a disordered region. The segment covering 45–54 (RRSEQLREDR) has biased composition (basic and acidic residues). Disulfide bonds link cysteine 113/cysteine 340, cysteine 331/cysteine 409, cysteine 441/cysteine 460, cysteine 486/cysteine 506, and cysteine 530/cysteine 543. The tract at residues 122–227 (LPATSVIITF…TEWLPPMLQR (106 aa)) is catalytic subdomain A. Residues aspartate 163 and arginine 188 each coordinate substrate. Mn(2+) is bound at residue aspartate 211. Residue serine 212 participates in substrate binding. Histidine 213 contacts Mn(2+). The interval 286–348 (PIRTPVIAGG…PCSRVGHVFR (63 aa)) is catalytic subdomain B. Tryptophan 317 lines the substrate pocket. Histidine 345 is a binding site for Mn(2+). Residues arginine 348, histidine 351, and tyrosine 353 each coordinate substrate. The Ricin B-type lectin domain maps to 428-555 (KEALPGIIKQ…DAQAQQWQLL (128 aa)).

This sequence belongs to the glycosyltransferase 2 family. GalNAc-T subfamily. The cofactor is Mn(2+).

It localises to the golgi apparatus membrane. It catalyses the reaction L-seryl-[protein] + UDP-N-acetyl-alpha-D-galactosamine = a 3-O-[N-acetyl-alpha-D-galactosaminyl]-L-seryl-[protein] + UDP + H(+). The enzyme catalyses L-threonyl-[protein] + UDP-N-acetyl-alpha-D-galactosamine = a 3-O-[N-acetyl-alpha-D-galactosaminyl]-L-threonyl-[protein] + UDP + H(+). It functions in the pathway protein modification; protein glycosylation. Its function is as follows. Catalyzes the initial reaction in O-linked oligosaccharide biosynthesis, the transfer of an N-acetyl-D-galactosamine residue to a serine or threonine residue on the protein receptor. In Homo sapiens (Human), this protein is Polypeptide N-acetylgalactosaminyltransferase 16 (GALNT16).